A 256-amino-acid polypeptide reads, in one-letter code: Indole-3-glycerol phosphate synthase (256 aa).

Belongs to the TrpC family.

It carries out the reaction 1-(2-carboxyphenylamino)-1-deoxy-D-ribulose 5-phosphate + H(+) = (1S,2R)-1-C-(indol-3-yl)glycerol 3-phosphate + CO2 + H2O. The protein operates within amino-acid biosynthesis; L-tryptophan biosynthesis; L-tryptophan from chorismate: step 4/5. This Pelodictyon phaeoclathratiforme (strain DSM 5477 / BU-1) protein is Indole-3-glycerol phosphate synthase.